We begin with the raw amino-acid sequence, 391 residues long: 5-amino-6-(D-ribitylamino)uracil--L-tyrosine 4-hydroxyphenyl transferase (391 aa).

Positions 55–302 constitute a Radical SAM core domain; the sequence is VTYVINRNIN…GAVARIYLGN (248 aa). Positions 69, 73, and 76 each coordinate [4Fe-4S] cluster.

Belongs to the radical SAM superfamily. CofH family. As to quaternary structure, consists of two subunits, CofG and CofH. [4Fe-4S] cluster is required as a cofactor.

It carries out the reaction 5-amino-6-(D-ribitylamino)uracil + L-tyrosine + S-adenosyl-L-methionine = 5-amino-5-(4-hydroxybenzyl)-6-(D-ribitylimino)-5,6-dihydrouracil + 2-iminoacetate + 5'-deoxyadenosine + L-methionine + H(+). The protein operates within cofactor biosynthesis; coenzyme F0 biosynthesis. Its function is as follows. Catalyzes the radical-mediated synthesis of 5-amino-5-(4-hydroxybenzyl)-6-(D-ribitylimino)-5,6-dihydrouracil from 5-amino-6-(D-ribitylamino)uracil and L-tyrosine. This Trichormus variabilis (strain ATCC 29413 / PCC 7937) (Anabaena variabilis) protein is 5-amino-6-(D-ribitylamino)uracil--L-tyrosine 4-hydroxyphenyl transferase.